The primary structure comprises 234 residues: Phosphoribosylformylglycinamidine synthase subunit PurQ (234 aa).

One can recognise a Glutamine amidotransferase type-1 domain in the interval 4–234 (RIGVVTFPGS…TSILKKLVNA (231 aa)). Cys-87 acts as the Nucleophile in catalysis. Residues His-204 and Glu-206 contribute to the active site.

As to quaternary structure, part of the FGAM synthase complex composed of 1 PurL, 1 PurQ and 2 PurS subunits.

Its subcellular location is the cytoplasm. It carries out the reaction N(2)-formyl-N(1)-(5-phospho-beta-D-ribosyl)glycinamide + L-glutamine + ATP + H2O = 2-formamido-N(1)-(5-O-phospho-beta-D-ribosyl)acetamidine + L-glutamate + ADP + phosphate + H(+). The enzyme catalyses L-glutamine + H2O = L-glutamate + NH4(+). It functions in the pathway purine metabolism; IMP biosynthesis via de novo pathway; 5-amino-1-(5-phospho-D-ribosyl)imidazole from N(2)-formyl-N(1)-(5-phospho-D-ribosyl)glycinamide: step 1/2. In terms of biological role, part of the phosphoribosylformylglycinamidine synthase complex involved in the purines biosynthetic pathway. Catalyzes the ATP-dependent conversion of formylglycinamide ribonucleotide (FGAR) and glutamine to yield formylglycinamidine ribonucleotide (FGAM) and glutamate. The FGAM synthase complex is composed of three subunits. PurQ produces an ammonia molecule by converting glutamine to glutamate. PurL transfers the ammonia molecule to FGAR to form FGAM in an ATP-dependent manner. PurS interacts with PurQ and PurL and is thought to assist in the transfer of the ammonia molecule from PurQ to PurL. This Streptomyces avermitilis (strain ATCC 31267 / DSM 46492 / JCM 5070 / NBRC 14893 / NCIMB 12804 / NRRL 8165 / MA-4680) protein is Phosphoribosylformylglycinamidine synthase subunit PurQ.